Here is a 297-residue protein sequence, read N- to C-terminus: Large ribosomal subunit protein uL18 (297 aa).

Gly-2 carries the post-translational modification N-acetylglycine. An N6-acetyllysine mark is found at Lys-5 and Lys-48. Ser-185 carries the phosphoserine modification. Residue Lys-220 is modified to N6-acetyllysine; alternate. Lys-220 is covalently cross-linked (Glycyl lysine isopeptide (Lys-Gly) (interchain with G-Cter in SUMO1); alternate). Lys-220 is covalently cross-linked (Glycyl lysine isopeptide (Lys-Gly) (interchain with G-Cter in SUMO2); alternate). The residue at position 232 (Thr-232) is a Phosphothreonine. Residues 253–297 (YEKKPKREVKKKRWNRPKMSLAQKKDRVAQKKASFLRAQERAAES) form a disordered region. Over residues 258 to 268 (KREVKKKRWNR) the composition is skewed to basic residues. Ser-272 carries the post-translational modification Phosphoserine.

Belongs to the universal ribosomal protein uL18 family. Component of the large ribosomal subunit (LSU). Part of the 5S RNP complex, which is a LSU subcomplex composed of the 5S RNA, RPL5 and RPL11. Component of a hexameric 5S RNP precursor complex, composed of 5S RNA, RRS1, RPF2/BXDC1, RPL5, RPL11 and HEATR3; this complex acts as a precursor for ribosome assembly. Interacts with NVL in an ATP-dependent manner. Interacts with RRP1B. Interacts with IPO5, IPO7 and KPNB1; these interactions may be involved in RPL5 nuclear import for the assembly of ribosomal subunits.

It localises to the cytoplasm. The protein resides in the nucleus. It is found in the nucleolus. In terms of biological role, component of the ribosome, a large ribonucleoprotein complex responsible for the synthesis of proteins in the cell. The small ribosomal subunit (SSU) binds messenger RNAs (mRNAs) and translates the encoded message by selecting cognate aminoacyl-transfer RNA (tRNA) molecules. The large subunit (LSU) contains the ribosomal catalytic site termed the peptidyl transferase center (PTC), which catalyzes the formation of peptide bonds, thereby polymerizing the amino acids delivered by tRNAs into a polypeptide chain. The nascent polypeptides leave the ribosome through a tunnel in the LSU and interact with protein factors that function in enzymatic processing, targeting, and the membrane insertion of nascent chains at the exit of the ribosomal tunnel. As part of the 5S RNP/5S ribonucleoprotein particle it is an essential component of the LSU, required for its formation and the maturation of rRNAs. It also couples ribosome biogenesis to p53/TP53 activation. As part of the 5S RNP it accumulates in the nucleoplasm and inhibits MDM2, when ribosome biogenesis is perturbed, mediating the stabilization and the activation of TP53. The protein is Large ribosomal subunit protein uL18 (Rpl5) of Mus musculus (Mouse).